Here is a 342-residue protein sequence, read N- to C-terminus: Dihydroorotate dehydrogenase (quinone) (342 aa).

Residues 60-64 (AGLDK) and T84 contribute to the FMN site. K64 contacts substrate. 109–113 (NRMGF) contributes to the substrate binding site. Positions 137 and 170 each coordinate FMN. Substrate is bound at residue N170. S173 acts as the Nucleophile in catalysis. N175 contributes to the substrate binding site. FMN-binding residues include K215 and T243. 244–245 (NT) is a substrate binding site. Residues G266, G295, and 316 to 317 (YS) each bind FMN.

The protein belongs to the dihydroorotate dehydrogenase family. Type 2 subfamily. As to quaternary structure, monomer. The cofactor is FMN.

The protein localises to the cell membrane. It catalyses the reaction (S)-dihydroorotate + a quinone = orotate + a quinol. The protein operates within pyrimidine metabolism; UMP biosynthesis via de novo pathway; orotate from (S)-dihydroorotate (quinone route): step 1/1. Functionally, catalyzes the conversion of dihydroorotate to orotate with quinone as electron acceptor. In Nitrosomonas europaea (strain ATCC 19718 / CIP 103999 / KCTC 2705 / NBRC 14298), this protein is Dihydroorotate dehydrogenase (quinone).